The following is a 414-amino-acid chain: Lipoyl synthase, mitochondrial (414 aa).

Residues 1-18 constitute a mitochondrion transit peptide; sequence MYRRSVGVLFVGRNTRWI. Residues 51–67 are compositionally biased toward polar residues; that stretch reads GNSTEVENATSQLTGTS. The tract at residues 51–75 is disordered; it reads GNSTEVENATSQLTGTSGKRRKGNR. [4Fe-4S] cluster contacts are provided by Cys-150, Cys-155, Cys-161, Cys-181, Cys-185, Cys-188, and Ser-396. A Radical SAM core domain is found at 164–385; the sequence is GKDKSKATAT…KERALEMGFL (222 aa).

Belongs to the radical SAM superfamily. Lipoyl synthase family. It depends on [4Fe-4S] cluster as a cofactor.

It localises to the mitochondrion. It catalyses the reaction [[Fe-S] cluster scaffold protein carrying a second [4Fe-4S](2+) cluster] + N(6)-octanoyl-L-lysyl-[protein] + 2 oxidized [2Fe-2S]-[ferredoxin] + 2 S-adenosyl-L-methionine + 4 H(+) = [[Fe-S] cluster scaffold protein] + N(6)-[(R)-dihydrolipoyl]-L-lysyl-[protein] + 4 Fe(3+) + 2 hydrogen sulfide + 2 5'-deoxyadenosine + 2 L-methionine + 2 reduced [2Fe-2S]-[ferredoxin]. Its pathway is protein modification; protein lipoylation via endogenous pathway; protein N(6)-(lipoyl)lysine from octanoyl-[acyl-carrier-protein]: step 2/2. Its function is as follows. Catalyzes the radical-mediated insertion of two sulfur atoms into the C-6 and C-8 positions of the octanoyl moiety bound to the lipoyl domains of lipoate-dependent enzymes, thereby converting the octanoylated domains into lipoylated derivatives. The protein is Lipoyl synthase, mitochondrial of Saccharomyces cerevisiae (strain RM11-1a) (Baker's yeast).